We begin with the raw amino-acid sequence, 540 residues long: 2-isopropylmalate synthase (540 aa).

Positions 8–271 (VLIFDTTLRD…NPFFGRESDS (264 aa)) constitute a Pyruvate carboxyltransferase domain. Positions 17, 208, 210, and 244 each coordinate Mn(2+). Residues 408–540 (QLRLVQVSCG…AVLADRRPGI (133 aa)) form a regulatory domain region.

It belongs to the alpha-IPM synthase/homocitrate synthase family. LeuA type 1 subfamily. In terms of assembly, homodimer. Mn(2+) is required as a cofactor.

It localises to the cytoplasm. It carries out the reaction 3-methyl-2-oxobutanoate + acetyl-CoA + H2O = (2S)-2-isopropylmalate + CoA + H(+). The protein operates within amino-acid biosynthesis; L-leucine biosynthesis; L-leucine from 3-methyl-2-oxobutanoate: step 1/4. Functionally, catalyzes the condensation of the acetyl group of acetyl-CoA with 3-methyl-2-oxobutanoate (2-ketoisovalerate) to form 3-carboxy-3-hydroxy-4-methylpentanoate (2-isopropylmalate). The protein is 2-isopropylmalate synthase of Prochlorococcus marinus (strain MIT 9303).